Reading from the N-terminus, the 238-residue chain is Female-specific protein 800 (238 aa).

Residues 35–50 (YSYHHTYNNNNQGNYQ) are compositionally biased toward low complexity. Disordered stretches follow at residues 35-112 (YSYH…KGGS) and 166-204 (NKRK…SKSP). Over residues 97–106 (RNDQIQSRGN) the composition is skewed to polar residues. The segment covering 171 to 187 (TKSEKNGRYIKKDHMNN) has biased composition (basic and acidic residues).

Functionally, FS800 is likely to have some function in the production or maintenance of the schistosome egg. This is Female-specific protein 800 from Schistosoma mansoni (Blood fluke).